We begin with the raw amino-acid sequence, 137 residues long: Ubiquitin-conjugating enzyme variant MMS2 (137 aa).

In terms of domain architecture, UBC core spans 5–137 (PRNFRLLEEL…LRQPKEGETF (133 aa)). S71 bears the Phosphoserine mark.

This sequence belongs to the ubiquitin-conjugating enzyme family. In terms of assembly, heterodimer with UBC13.

In terms of biological role, has a role in the DNA error-free postreplication repair (PRR) pathway. Lacks catalytic activity by itself. The UBC13/MMS2 heterodimer catalyzes the synthesis of non-canonical poly-ubiquitin chains that are linked through 'Lys-63'. This is Ubiquitin-conjugating enzyme variant MMS2 (MMS2) from Saccharomyces cerevisiae (strain ATCC 204508 / S288c) (Baker's yeast).